The chain runs to 147 residues: MATKIRLKRLGKIRTPHYRVVVMDSRAKRDGRAIEEIGQYHPKADPSVIVIDSERVQYWLGVGAQPTEAVVALLKRTGDWQKFTGDTSPSGVKPQPERPNKDDLFNAALAEADEAPREAITKKSEGAAADEASESAAGDNSGEKAEA.

Residues Gln-81–Ala-147 are disordered. 2 stretches are compositionally biased toward basic and acidic residues: residues Gln-95–Leu-104 and Glu-114–Glu-125. Residues Gly-126–Asn-140 are compositionally biased toward low complexity.

The protein belongs to the bacterial ribosomal protein bS16 family.

The polypeptide is Small ribosomal subunit protein bS16 (Cutibacterium acnes (strain DSM 16379 / KPA171202) (Propionibacterium acnes)).